Here is a 334-residue protein sequence, read N- to C-terminus: MTKVVVCALYKFVSLPHFESIRAPLLAMMEQAEIKGTLLLASEGINGTVAGTQEAIEALLLWLNSQNGLDNIVHKLSFDDEMPFYRTKVKLKNEIVTMGVEGIDPLKVVGTYVKPQDWNALISDPDVILVDTRNDYEVQIGTFKNAVNPVTETFREFPEYVKQNLDPAKHKKVAMFCTGGIRCEKSTAYLKEQGFDEVYHLEGGILKYLEEVKAEESLWEGECFVFDNRVAVNHDLKKGQYDQCNACRMPITEAEKQSPAYVQGVSCPHCIDKISDEQRKRFVERERQVNLAKARNEAHIGSDVNQVIEARREKKEAQRRLAAEKNNAKKSQVL.

Positions 123-217 (SDPDVILVDT…YLEEVKAEES (95 aa)) constitute a Rhodanese domain. The active-site Cysteine persulfide intermediate is the cysteine 177.

Belongs to the TrhO family.

The catalysed reaction is uridine(34) in tRNA + AH2 + O2 = 5-hydroxyuridine(34) in tRNA + A + H2O. Catalyzes oxygen-dependent 5-hydroxyuridine (ho5U) modification at position 34 in tRNAs. In Shewanella baltica (strain OS185), this protein is tRNA uridine(34) hydroxylase.